Here is a 249-residue protein sequence, read N- to C-terminus: uncharacterized protein (249 aa).

An N-terminal signal peptide occupies residues 1–25 (MRYLNTKNIIAAGVLLSCMSSIAWG).

Belongs to the periplasmic pilus chaperone family.

It localises to the periplasm. Could be required for the biogenesis of a putative fimbria. This is an uncharacterized protein from Escherichia coli (strain K12).